A 301-amino-acid chain; its full sequence is Porphobilinogen deaminase (301 aa).

Cysteine 235 carries the post-translational modification S-(dipyrrolylmethanemethyl)cysteine.

Belongs to the HMBS family. In terms of assembly, monomer. Dipyrromethane serves as cofactor.

The catalysed reaction is 4 porphobilinogen + H2O = hydroxymethylbilane + 4 NH4(+). It participates in porphyrin-containing compound metabolism; protoporphyrin-IX biosynthesis; coproporphyrinogen-III from 5-aminolevulinate: step 2/4. Functionally, tetrapolymerization of the monopyrrole PBG into the hydroxymethylbilane pre-uroporphyrinogen in several discrete steps. This chain is Porphobilinogen deaminase, found in Thermus thermophilus (strain ATCC BAA-163 / DSM 7039 / HB27).